The following is a 246-amino-acid chain: Bis(5'-nucleosyl)-tetraphosphatase PrpE [asymmetrical] (246 aa).

It belongs to the PrpE family. It depends on Ni(2+) as a cofactor.

It catalyses the reaction P(1),P(4)-bis(5'-guanosyl) tetraphosphate + H2O = GMP + GTP + 2 H(+). In terms of biological role, asymmetrically hydrolyzes Ap4p to yield AMP and ATP. The sequence is that of Bis(5'-nucleosyl)-tetraphosphatase PrpE [asymmetrical] from Bacillus cereus (strain B4264).